A 509-amino-acid chain; its full sequence is Kynureninase 1 (509 aa).

Residues L154, T155, 183–186 (FPSD), D270, H273, and Y295 each bind pyridoxal 5'-phosphate. K296 bears the N6-(pyridoxal phosphate)lysine mark. W345 and N373 together coordinate pyridoxal 5'-phosphate.

Belongs to the kynureninase family. Homodimer. Pyridoxal 5'-phosphate is required as a cofactor.

The protein resides in the cytoplasm. The enzyme catalyses L-kynurenine + H2O = anthranilate + L-alanine + H(+). It catalyses the reaction 3-hydroxy-L-kynurenine + H2O = 3-hydroxyanthranilate + L-alanine + H(+). The protein operates within amino-acid degradation; L-kynurenine degradation; L-alanine and anthranilate from L-kynurenine: step 1/1. It participates in cofactor biosynthesis; NAD(+) biosynthesis; quinolinate from L-kynurenine: step 2/3. Functionally, catalyzes the cleavage of L-kynurenine (L-Kyn) and L-3-hydroxykynurenine (L-3OHKyn) into anthranilic acid (AA) and 3-hydroxyanthranilic acid (3-OHAA), respectively. The polypeptide is Kynureninase 1 (Chaetomium globosum (strain ATCC 6205 / CBS 148.51 / DSM 1962 / NBRC 6347 / NRRL 1970) (Soil fungus)).